Consider the following 270-residue polypeptide: Tryptophan synthase alpha chain (270 aa).

Active-site proton acceptor residues include Glu-57 and Asp-68.

This sequence belongs to the TrpA family. As to quaternary structure, tetramer of two alpha and two beta chains.

It carries out the reaction (1S,2R)-1-C-(indol-3-yl)glycerol 3-phosphate + L-serine = D-glyceraldehyde 3-phosphate + L-tryptophan + H2O. It functions in the pathway amino-acid biosynthesis; L-tryptophan biosynthesis; L-tryptophan from chorismate: step 5/5. Functionally, the alpha subunit is responsible for the aldol cleavage of indoleglycerol phosphate to indole and glyceraldehyde 3-phosphate. This is Tryptophan synthase alpha chain from Mycobacterium leprae (strain Br4923).